Here is a 274-residue protein sequence, read N- to C-terminus: Hematopoietically-expressed homeobox protein hhex (274 aa).

A DNA-binding region (homeobox) is located at residues 139-198 (RKGGQVRFSNDQTIELEKKFETQKYLSPPERKRLAKMLQLSERQVKTWFQNRRAKWRRLK). The tract at residues 197-274 (LKQENPQGNK…GDKGFYNCAH (78 aa)) is disordered. Residues 237 to 248 (DEPTSSPTSQET) are compositionally biased toward polar residues. Positions 249-263 (LDSEVSDDSDQEVDI) are enriched in acidic residues.

Expressed in the most dorsoanterior endomesoderm of the blastula and gastrula embryo, and later is restricted to the forming liver diverticulum.

The protein localises to the nucleus. Functionally, recognizes the DNA sequence 5'-ATTAA-3'. Transcriptional repressor. Regulates the differentiation of both endothelial and blood cells. Probably plays a role in the proliferation of vascular endothelial cells during blood vessel development. Establishes anterior identity at two levels; acts early to enhance canonical wnt-signaling by repressing expression of tle4, and acts later to inhibit nodal-signaling by directly targeting nodal/nr1 and nodal2/nr2. May play a role in liver development. Induces heart development. The protein is Hematopoietically-expressed homeobox protein hhex of Xenopus tropicalis (Western clawed frog).